The following is a 1007-amino-acid chain: Beta-galactosidase A (1007 aa).

Positions 1-18 are cleaved as a signal peptide; the sequence is MKLSSACAIALLAAQAAG. Substrate contacts are provided by residues tyrosine 96 and 140 to 142; that span reads NAE. The N-linked (GlcNAc...) asparagine glycan is linked to asparagine 156. A substrate-binding site is contributed by asparagine 199. Residue glutamate 200 is the Proton donor of the active site. Cystine bridges form between cysteine 205/cysteine 206 and cysteine 266/cysteine 315. Residue glutamate 298 is the Nucleophile of the active site. Substrate is bound at residue tyrosine 364. N-linked (GlcNAc...) asparagine glycosylation is found at asparagine 402, asparagine 422, asparagine 478, asparagine 522, asparagine 622, asparagine 739, asparagine 760, asparagine 777, asparagine 805, and asparagine 914.

This sequence belongs to the glycosyl hydrolase 35 family.

It localises to the secreted. The catalysed reaction is Hydrolysis of terminal non-reducing beta-D-galactose residues in beta-D-galactosides.. In terms of biological role, cleaves beta-linked terminal galactosyl residues from gangliosides, glycoproteins, and glycosaminoglycans. This Aspergillus niger (strain ATCC MYA-4892 / CBS 513.88 / FGSC A1513) protein is Beta-galactosidase A (lacA).